Here is a 251-residue protein sequence, read N- to C-terminus: Uroporphyrinogen-III C-methyltransferase (251 aa).

S-adenosyl-L-homocysteine is bound by residues P17, 93-95 (GGD), 123-124 (TS), M177, and A206.

The protein belongs to the precorrin methyltransferase family.

It is found in the plastid. The protein localises to the chloroplast. The catalysed reaction is uroporphyrinogen III + 2 S-adenosyl-L-methionine = precorrin-2 + 2 S-adenosyl-L-homocysteine + H(+). It functions in the pathway cofactor biosynthesis; adenosylcobalamin biosynthesis; precorrin-2 from uroporphyrinogen III: step 1/1. Its pathway is porphyrin-containing compound metabolism; siroheme biosynthesis; precorrin-2 from uroporphyrinogen III: step 1/1. Catalyzes the two successive C-2 and C-7 methylation reactions involved in the conversion of uroporphyrinogen III to precorrin-2 via the intermediate formation of precorrin-1. It is a step in the biosynthesis of both cobalamin (vitamin B12) and siroheme. The sequence is that of Uroporphyrinogen-III C-methyltransferase (cobA) from Cyanidium caldarium (Red alga).